The chain runs to 343 residues: Biotin synthase 2 (343 aa).

A Radical SAM core domain is found at 58-285; that stretch reads NEVQLSTLLS…LTMVRLSAGR (228 aa). 3 residues coordinate [4Fe-4S] cluster: C73, C77, and C80. [2Fe-2S] cluster contacts are provided by C117, C148, C208, and R280.

It belongs to the radical SAM superfamily. Biotin synthase family. In terms of assembly, homodimer. The cofactor is [4Fe-4S] cluster. Requires [2Fe-2S] cluster as cofactor.

It catalyses the reaction (4R,5S)-dethiobiotin + (sulfur carrier)-SH + 2 reduced [2Fe-2S]-[ferredoxin] + 2 S-adenosyl-L-methionine = (sulfur carrier)-H + biotin + 2 5'-deoxyadenosine + 2 L-methionine + 2 oxidized [2Fe-2S]-[ferredoxin]. The protein operates within cofactor biosynthesis; biotin biosynthesis; biotin from 7,8-diaminononanoate: step 2/2. Catalyzes the conversion of dethiobiotin (DTB) to biotin by the insertion of a sulfur atom into dethiobiotin via a radical-based mechanism. In Polaromonas sp. (strain JS666 / ATCC BAA-500), this protein is Biotin synthase 2.